Here is a 186-residue protein sequence, read N- to C-terminus: Der GTPase-activating protein YihI (186 aa).

Residues 39–77 (LDAKAREDKKKRKHKGLASGSRHSAVEEKANKLQNEIKD) form a disordered region. Basic and acidic residues predominate over residues 62–77 (SAVEEKANKLQNEIKD).

The protein belongs to the YihI family. As to quaternary structure, interacts with Der.

Its function is as follows. A GTPase-activating protein (GAP) that modifies Der/EngA GTPase function. May play a role in ribosome biogenesis. This Haemophilus influenzae (strain 86-028NP) protein is Der GTPase-activating protein YihI.